The primary structure comprises 320 residues: Coproporphyrin III ferrochelatase (320 aa).

2 residues coordinate Fe(2+): histidine 194 and glutamate 273.

It belongs to the ferrochelatase family.

It localises to the cytoplasm. The catalysed reaction is Fe-coproporphyrin III + 2 H(+) = coproporphyrin III + Fe(2+). Its pathway is porphyrin-containing compound metabolism; protoheme biosynthesis. Functionally, involved in coproporphyrin-dependent heme b biosynthesis. Catalyzes the insertion of ferrous iron into coproporphyrin III to form Fe-coproporphyrin III. This chain is Coproporphyrin III ferrochelatase, found in Symbiobacterium thermophilum (strain DSM 24528 / JCM 14929 / IAM 14863 / T).